A 902-amino-acid polypeptide reads, in one-letter code: MSEFRIHHDVNELLSLLRVHGGDGAEVYIDLLQKNRTPYVTTTVSAHSAKVKIAEFSRTPEDFLKKYDELKSKNTRNLDPLVYLLSKLTEDKETLQYLQQNAKERAELAAAAVGSSTTSVNVPAAASKISMQELEELRKQLGSVATGSTLQQSLELKRKMLRDKQNKKNSDQHLPIFPAWVYERPALIGDFLIGAGISTDTALPIGTLPLASQESAVVEDLLYVLVGVDGRYVTAQPLAGRQSRTFLVDPNLDLSIRELVNRILPVAASYSTVTRFIEEKSSFEYGQVNHALAAAMRTLVKEHLILVSQLEQLHRQGLLSLQKLWFYIQPAMRTMDILASLATSVDKGECLGGSTLSLLHDRSFSYTGDSQAQELCLYLTKAASAPYFEVLEKWIYRGIIHDPYSEFMVEEHELRKERIQEDYNDKYWDQRYTIVQQQIPSFLQKMADKILSTGKYLNVVRECGHDVTCPVAKEIIYTLKERAYVEQIEKAFNYASKVLLDFLMEEKELVAHLRSIKRYFLMDQGDFFVHFMDLAEEELRKPVEDITPPRLEALLELALRMSTANTDPFKDDLKIDLMPHDLITQLLRVLAIETKQEKAMAHADPTELTLSGLEAFSFDYIVKWPLSLIINRKALTRYQMLFRHMFYCKHVERQLCSVWISNKTAKQHSLPSAQWFAGAFTLRQRMLNFVQNIQYYMMFEVMEPTWHILEKNLKSASNIDDVLGYHTGFLDTCLKDCMLTNPELLKVFSKLMSVCVMFTNCMQKFTQSMKLDGELGGQTLEHGTLPGLPAGAEDRARKELARKHLAEHADAAQLVSGFEATINKFDKNFSAHLLDLLARLSIYSTSDCEHGMASVTSRLDFNGFYTERLERLSAERSQKAAPQVPVLRGPPAPAPRVAVTAQ.

Position 83 is a phosphotyrosine (Tyr83). The segment at 875 to 902 (ERSQKAAPQVPVLRGPPAPAPRVAVTAQ) is disordered.

Belongs to the TUBGCP family. Component of the gamma-tubulin ring complex (gTuRC) consisting of TUBGCP2, TUBGCP3, TUBGCP4, TUBGCP5 and TUBGCP6 and gamma-tubulin TUBG1 or TUBG2. TUBGCP2, TUBGCP3, TUBGCP4, TUBGCP5 and TUBGCP6 assemble in a 5:5:2:1:1 stoichiometry; each is associated with a gamma-tubulin, thereby arranging 14 gamma-tubulins in a helical manner. Gamma-tubulin at the first position is blocked by TUBGCP3 at the last position, allowing 13 protafilaments to grow into a microtubule. The gTuRC (via TUBGCP3 and TUBGCP6) interacts with ACTB and MZT1; the interactions form a luminal bridge that stabilizes the initial structure during complex assembly. The gTuRC (via TUBGCP2) interacts with MZT2A/MZT2B and CDK5RAP2 (via CM1 motif); the interactions play a role in gTuRC activation. Interacts with ATF5; the ATF5:PCNT:polyglutamylated tubulin (PGT) tripartite unites the mother centriole and the pericentriolar material (PCM) in the centrosome.

The protein localises to the cytoplasm. It localises to the cytoskeleton. Its subcellular location is the microtubule organizing center. The protein resides in the centrosome. Component of the gamma-tubulin ring complex (gTuRC) which mediates microtubule nucleation. The gTuRC regulates the minus-end nucleation of alpha-beta tubulin heterodimers that grow into microtubule protafilaments, a critical step in centrosome duplication and spindle formation. Plays a role in neuronal migration. In Pongo abelii (Sumatran orangutan), this protein is Gamma-tubulin complex component 2 (TUBGCP2).